The chain runs to 432 residues: MSELKDCPLQFHDFKSVDHLKVCPRYTAVLARSEDDGIGIEELDTLQLELETLLSSASRRLRVLEAETQILTDWQDKKGDRRFLKLGRDHELGAPPKHGKPKKQKLEGKAGHGPGPGPGRPKSKNLQPKVQEYEFTDDPIDVPRIPKNDAPNRFWASVEPYCADITSEEVRTLEELLKPPEDEAEHYKIPPLGKHYSQRWAQEDLLEEQKDGARAAAVADKKKGLMGPLTELDTKDVDALPKKSEAQHEQPEDGCPFGALTQRLLQALVEENIISPMEDSPIPDMSGKESGADGASTSPRNQNKPFSVPHTKSLESRIKEELIAQGLLESEDRPAEDSEDEVLAELRKRQAELKALSAHNRTKKHDLLRLAKEEVSRQELRQRVRMADNEVMDAFRKIMAARQKKRTPTKKEKDQAWKTLKERESILKLLDG.

A Glycyl lysine isopeptide (Lys-Gly) (interchain with G-Cter in SUMO2) cross-link involves residue Lys-21. Positions Ile-40–Gln-69 form a coiled coil. The tract at residues Gly-87 to Gln-127 is disordered. Lys-129 participates in a covalent cross-link: Glycyl lysine isopeptide (Lys-Gly) (interchain with G-Cter in SUMO2). Basic and acidic residues-rich tracts occupy residues Asp-211–Lys-223 and Leu-232–Pro-251. Disordered stretches follow at residues Asp-211 to Phe-257 and Glu-271 to Lys-319. Ser-280 and Ser-298 each carry phosphoserine. Polar residues predominate over residues Ala-295–Pro-305. Residues Leu-367–Thr-407 adopt a coiled-coil conformation. Lys-418 is modified (N6-acetyllysine).

It belongs to the NGG1 family. As to quaternary structure, the PCAF complex is composed of a number of TBP-associated factors (TAFS), such as TAF5, TAF5L, TAF6, TAF6L, TAF9, TAF10 and TAF12, PCAF, and also PCAF-associated factors (PAFs), such as TADA2L/ADA2, TADA3L/ADA3 and SPT3. Interacts directly with TADA2L and PCAF and also with the high-risk HPV oncoprotein E6. Component of the STAGA transcription coactivator-HAT complex, at least composed of SUPT3H, GCN5L2, TAF5L, TAF6L, SUPT7L, TADA3L, TAD1L, TAF10, TAF12, TRRAP and TAF9. Component of the TFTC-HAT complex. Component of the ADA2A-containing complex (ATAC), composed of KAT14, KAT2A, TADA2L, TADA3L, ZZ3, MBIP, WDR5, YEATS2, CCDC101 and DR1.

It localises to the nucleus. Its function is as follows. Functions as a component of the PCAF complex. The PCAF complex is capable of efficiently acetylating histones in a nucleosomal context. The PCAF complex could be considered as the human version of the yeast SAGA complex. Also known as a coactivator for p53/TP53-dependent transcriptional activation. Component of the ATAC complex, a complex with histone acetyltransferase activity on histones H3 and H4. This is Transcriptional adapter 3 (TADA3) from Pongo abelii (Sumatran orangutan).